Reading from the N-terminus, the 87-residue chain is DNA-directed RNA polymerase subunit omega (87 aa).

The protein belongs to the RNA polymerase subunit omega family. The RNAP catalytic core consists of 2 alpha, 1 beta, 1 beta' and 1 omega subunit. When a sigma factor is associated with the core the holoenzyme is formed, which can initiate transcription.

It catalyses the reaction RNA(n) + a ribonucleoside 5'-triphosphate = RNA(n+1) + diphosphate. Its function is as follows. Promotes RNA polymerase assembly. Latches the N- and C-terminal regions of the beta' subunit thereby facilitating its interaction with the beta and alpha subunits. The sequence is that of DNA-directed RNA polymerase subunit omega from Pseudomonas putida (strain W619).